A 265-amino-acid polypeptide reads, in one-letter code: Mlc titration factor A (265 aa).

Zn(2+) is bound by residues histidine 111, histidine 148, histidine 152, and glutamate 211.

This sequence belongs to the MtfA family. As to quaternary structure, interacts with Mlc. The cofactor is Zn(2+).

The protein resides in the cytoplasm. Involved in the modulation of the activity of the glucose-phosphotransferase system (glucose-PTS). Interacts with the transcriptional repressor Mlc, preventing its interaction with DNA and leading to the modulation of expression of genes regulated by Mlc, including ptsG, which encodes the PTS system glucose-specific EIICB component. Functionally, shows zinc-dependent metallopeptidase activity. The protein is Mlc titration factor A of Salmonella choleraesuis (strain SC-B67).